A 345-amino-acid chain; its full sequence is Phosphoribosylformylglycinamidine cyclo-ligase (345 aa).

The protein belongs to the AIR synthase family.

Its subcellular location is the cytoplasm. The enzyme catalyses 2-formamido-N(1)-(5-O-phospho-beta-D-ribosyl)acetamidine + ATP = 5-amino-1-(5-phospho-beta-D-ribosyl)imidazole + ADP + phosphate + H(+). It functions in the pathway purine metabolism; IMP biosynthesis via de novo pathway; 5-amino-1-(5-phospho-D-ribosyl)imidazole from N(2)-formyl-N(1)-(5-phospho-D-ribosyl)glycinamide: step 2/2. The chain is Phosphoribosylformylglycinamidine cyclo-ligase from Chromobacterium violaceum (strain ATCC 12472 / DSM 30191 / JCM 1249 / CCUG 213 / NBRC 12614 / NCIMB 9131 / NCTC 9757 / MK).